The following is a 185-amino-acid chain: GTP cyclohydrolase 1 (185 aa).

Cys-76, His-79, and Cys-147 together coordinate Zn(2+).

This sequence belongs to the GTP cyclohydrolase I family. As to quaternary structure, toroid-shaped homodecamer, composed of two pentamers of five dimers.

It catalyses the reaction GTP + H2O = 7,8-dihydroneopterin 3'-triphosphate + formate + H(+). It functions in the pathway cofactor biosynthesis; 7,8-dihydroneopterin triphosphate biosynthesis; 7,8-dihydroneopterin triphosphate from GTP: step 1/1. This Clostridium perfringens (strain 13 / Type A) protein is GTP cyclohydrolase 1.